Consider the following 351-residue polypeptide: Prostaglandin reductase 2 (351 aa).

99–100 is a substrate binding site; it reads FY. NADP(+) contacts are provided by residues 165-168, Lys-192, Tyr-208, Asn-231, 253-259, 287-289, and Asn-337; these read GACG, CGQISQY, and FMV. A substrate-binding site is contributed by 288 to 290; it reads MVL.

Belongs to the NADP-dependent oxidoreductase L4BD family. As to quaternary structure, monomer.

It is found in the cytoplasm. It catalyses the reaction 13,14-dihydro-15-oxo-prostaglandin E2 + NAD(+) = 15-oxoprostaglandin E2 + NADH + H(+). The enzyme catalyses 13,14-dihydro-15-oxo-prostaglandin E2 + NADP(+) = 15-oxoprostaglandin E2 + NADPH + H(+). The catalysed reaction is 13,14-dihydro-15-oxo-PGF2alpha + NADP(+) = 15-oxoprostaglandin F2alpha + NADPH + H(+). It carries out the reaction 13,14-dihydro-15-oxo-prostaglandin E1 + NADP(+) = 15-oxoprostaglandin E1 + NADPH + H(+). It catalyses the reaction 13,14-dihydro-15-oxo-prostaglandin F1alpha + NADP(+) = 15-oxoprostaglandin F1alpha + NADPH + H(+). Its function is as follows. Functions as 15-oxo-prostaglandin 13-reductase and acts on 15-keto-PGE1, 15-keto-PGE2, 15-keto-PGE1-alpha and 15-keto-PGE2-alpha with highest activity towards 15-keto-PGE2. Overexpression represses transcriptional activity of PPARG and inhibits adipocyte differentiation. This Rattus norvegicus (Rat) protein is Prostaglandin reductase 2.